The sequence spans 194 residues: Calcium channel flower (194 aa).

Helical transmembrane passes span 35-55 (LGIVAAFFAILFGLWNVFSII), 66-88 (IIQMVAGFVVMLLEAPCCFVCFE), and 113-133 (AIPPIILCFGLASLFGSGLIF).

The protein belongs to the calcium channel flower family. As to quaternary structure, homomultimer. Associates with the dally/ magu complex.

It localises to the cytoplasmic vesicle. The protein localises to the secretory vesicle. Its subcellular location is the synaptic vesicle membrane. The protein resides in the presynaptic cell membrane. It is found in the endosome. With respect to regulation, channel activity is inhibited by La(3+), which reduces Ca(2+) influx and thus inhibits it's function in promoting activity-dependent bulk endocytosis (ADBE) in response to high stimuli. Transmembrane protein which mediates synaptic endocytosis, fitness-based cell culling, neuronal culling, morphogen gradient scaling, and calcium transport. Regulates synaptic endocytosis and hence couples exo- with endocytosis. Controls two major modes of synaptic vesicle (SV) endocytosis in the synaptic boutons of neuromuscular junctions (NMJs); Ca(2+) channel-independent Clathrin-mediated endocytosis (CME) in response to mild stimulation, and Ca(2+) channel-dependent activity-dependent bulk endocytosis (ADBE) in response to strong stimulation. Functions in ADBE and subsequent SV reformation from bulk endosomes by initiating Ca(2+) channel-dependent phosphatidylinositol 4,5-bisphosphate (PtdIns(4,5)P2) compartmentalization in synaptic boutons. There it acts at the periactive zone to provide the low Ca(2+) levels required to initiate Calcineurin activation and upregulate PtdIns(4,5)P2. Conversely PtdIns(4,5)P2 enhances fwe Ca(2+) channel-activity, establishing a positive feedback loop that induces PtdIns(4,5)P2 microdomain at the periactive zone. These microdomains trigger bulk membrane invagination (i.e. ADBE) by triggering actin polymerization while also promoting localization of fwe to bulk endosomes, thereby removing the ADBE trigger to reduce endocytosis and prevent excess membrane uptake. PtdIns(4,5)P2 then promotes SV reformation from the bulk endosomes, to coordinate ADBE and subsequent SV reformation. Different combinations of the flower isoforms at the cell membrane are also required for the identification and elimination of suboptimal or supernumerary cells during development, regeneration, and adulthood. Required for the recognition and elimination of unfit cells in the developing wing during cell competition. In the developing pupal retina, mediates the elimination of unwanted postmitotic neurons, including supernumerary photoreceptor neurons that form at the periphery of the retina and are contained within incomplete ommatidia units. Also required for efficient elimination and replacement of old neurons by newly generated neurons during regeneration in the adult brain following mechanical injury. Downstream of the flower fitness fingerprints, cells identified as unwanted or unfit are eliminated via apoptosis through the expression of ahuizotl (azot). However, the cells marked for elimination by the flower isoforms only undergo apoptosis if additional thresholds are met; (1) their neighboring fit/healthy cells express different levels of the fwe isoforms, and (2) the levels of the protective signal SPARC expressed by the loser or unwanted cells are unable to inhibit caspase activation. These additional thresholds for flower-mediated apoptosis, allows useful cells to recover from transient and limited stress before they are unnecessarily eliminated. Functions with dally and magu in a mechanism of scaling, which utilises apoptosis to ensure that the dpp morphogen gradient, which mediates organ growth, remains proportional to the size of the growing wing. In this mechanism, fwe represses dally- and Magu-dependent activity in expanding the gradient, and dally/Magu inhibits fwe-dependent apoptosis to keep cell death rate low. When the levels of these different proteins are optimally regulated the gradient correctly scales with organ growth but when this fails, fwe-mediated apoptosis is activated to trim the developing tissue to match the correct size of the gradient. The chain is Calcium channel flower from Drosophila yakuba (Fruit fly).